The chain runs to 355 residues: Cyclic nucleotide-gated potassium channel RHE_CH03180 (355 aa).

The Cytoplasmic segment spans residues 1–12 (MSAVPFSKISTP). The helical transmembrane segment at 13–30 (LNALFATIGLLVVAALTT) threads the bilayer. Residues 31–38 (QGLTGQER) are Periplasmic-facing. The helical transmembrane segment at 39 to 61 (LVFELLLAAIWLAYVLQLSGTLL) threads the bilayer. The Cytoplasmic segment spans residues 62–73 (SRRRRLSGEMTA). A helical transmembrane segment spans residues 74 to 93 (LVIDLLAVLVPAAAFLFVGS). The helical transmembrane segment at 94–111 (RDRDLYCAIWLLKPLRDS) threads the bilayer. Residues 112-128 (TFFRLLAKVVANESRNL) lie on the Cytoplasmic side of the membrane. The chain crosses the membrane as a helical span at residues 129 to 149 (LGVTSVFGIVLFGAALAGYII). Residues 150–160 (ERDVQPDKFGS) lie on the Periplasmic side of the membrane. The segment at residues 161-179 (IPQAMWWAVVTLSTTGYGD) is an intramembrane region (pore-forming). A Selectivity filter motif is present at residues 174 to 179 (TTGYGD). At 180–184 (EIPQS) the chain is on the periplasmic side. Residues 185–209 (LAGRVLAGLVMMSGIGIFALWAGIL) form a helical membrane-spanning segment. The Cytoplasmic segment spans residues 210–355 (ATGFYEEVRR…LERRGGPPKE (146 aa)). Residues 297 to 298 (GE), 307 to 308 (RS), and R348 each bind 3',5'-cyclic AMP.

The protein belongs to the potassium channel family. As to quaternary structure, homotetramer.

It is found in the cell membrane. Its function is as follows. Cyclic nucleotide-regulated potassium channel activated by cAMP. The chain is Cyclic nucleotide-gated potassium channel RHE_CH03180 from Rhizobium etli (strain ATCC 51251 / DSM 11541 / JCM 21823 / NBRC 15573 / CFN 42).